Consider the following 449-residue polypeptide: Phosphoglucosamine mutase (449 aa).

Serine 101 acts as the Phosphoserine intermediate in catalysis. Mg(2+)-binding residues include serine 101, aspartate 241, aspartate 243, and aspartate 245. The residue at position 101 (serine 101) is a Phosphoserine.

It belongs to the phosphohexose mutase family. Requires Mg(2+) as cofactor. Activated by phosphorylation.

The catalysed reaction is alpha-D-glucosamine 1-phosphate = D-glucosamine 6-phosphate. Catalyzes the conversion of glucosamine-6-phosphate to glucosamine-1-phosphate. This Ruminiclostridium cellulolyticum (strain ATCC 35319 / DSM 5812 / JCM 6584 / H10) (Clostridium cellulolyticum) protein is Phosphoglucosamine mutase.